The chain runs to 475 residues: Adenosylhomocysteinase (475 aa).

Substrate is bound by residues Thr-63, Asp-138, and Glu-199. An NAD(+)-binding site is contributed by 200-202 (TTT). Substrate-binding residues include Lys-229 and Asp-233. NAD(+) contacts are provided by residues Asn-234, 263–268 (GYGDVG), Glu-286, Asn-321, 342–344 (IGH), and Asn-389.

Belongs to the adenosylhomocysteinase family. NAD(+) serves as cofactor.

It localises to the cytoplasm. It catalyses the reaction S-adenosyl-L-homocysteine + H2O = L-homocysteine + adenosine. It participates in amino-acid biosynthesis; L-homocysteine biosynthesis; L-homocysteine from S-adenosyl-L-homocysteine: step 1/1. In terms of biological role, may play a key role in the regulation of the intracellular concentration of adenosylhomocysteine. This Solibacter usitatus (strain Ellin6076) protein is Adenosylhomocysteinase.